The sequence spans 440 residues: Signal recognition particle 54 kDa protein (440 aa).

Residues 104–111 (GLQGSGKT), 184–188 (DTAGR), and 242–245 (TKLD) each bind GTP.

This sequence belongs to the GTP-binding SRP family. SRP54 subfamily. In terms of assembly, part of the signal recognition particle protein translocation system, which is composed of SRP and FtsY. Archaeal SRP consists of a 7S RNA molecule of 300 nucleotides and two protein subunits: SRP54 and SRP19.

The protein resides in the cytoplasm. It carries out the reaction GTP + H2O = GDP + phosphate + H(+). In terms of biological role, involved in targeting and insertion of nascent membrane proteins into the cytoplasmic membrane. Binds to the hydrophobic signal sequence of the ribosome-nascent chain (RNC) as it emerges from the ribosomes. The SRP-RNC complex is then targeted to the cytoplasmic membrane where it interacts with the SRP receptor FtsY. The sequence is that of Signal recognition particle 54 kDa protein from Methanosarcina acetivorans (strain ATCC 35395 / DSM 2834 / JCM 12185 / C2A).